Consider the following 264-residue polypeptide: Tryptophan synthase alpha chain (264 aa).

Active-site proton acceptor residues include E49 and D60.

This sequence belongs to the TrpA family. As to quaternary structure, tetramer of two alpha and two beta chains.

The enzyme catalyses (1S,2R)-1-C-(indol-3-yl)glycerol 3-phosphate + L-serine = D-glyceraldehyde 3-phosphate + L-tryptophan + H2O. It participates in amino-acid biosynthesis; L-tryptophan biosynthesis; L-tryptophan from chorismate: step 5/5. Its function is as follows. The alpha subunit is responsible for the aldol cleavage of indoleglycerol phosphate to indole and glyceraldehyde 3-phosphate. The chain is Tryptophan synthase alpha chain from Geobacter sulfurreducens (strain ATCC 51573 / DSM 12127 / PCA).